The chain runs to 756 residues: Virulence factor MDV010 (756 aa).

The first 30 residues, 1-30 (MPSKSIADHHAGYGVALAIVALLLIHGTAL), serve as a signal peptide directing secretion. The disordered stretch occupies residues 96 to 120 (EEHITLSSPRTSTKTTNENGHEKDS). The segment covering 100 to 113 (TLSSPRTSTKTTNE) has biased composition (polar residues). Residues Asn222, Asn241, Asn287, Asn423, Asn495, Asn542, Asn552, Asn580, Asn660, Asn684, Asn715, and Asn744 are each glycosylated (N-linked (GlcNAc...) asparagine; by host).

It is found in the secreted. In terms of biological role, may play a role in host immune modulation since the protein is secreted and provides an advantage for growth in vivo while it is completely dispensable in cell culture. This chain is Virulence factor MDV010 (MDV010), found in Gallid herpesvirus 2 (strain Chicken/Md5/ATCC VR-987) (GaHV-2).